A 371-amino-acid polypeptide reads, in one-letter code: Chorismate synthase (371 aa).

The NADP(+) site is built by Arg48 and Arg54. FMN-binding positions include 131 to 133 (RSS), 245 to 246 (NA), Gly290, 305 to 309 (KPTSS), and Arg331.

The protein belongs to the chorismate synthase family. In terms of assembly, homotetramer. It depends on FMNH2 as a cofactor.

It catalyses the reaction 5-O-(1-carboxyvinyl)-3-phosphoshikimate = chorismate + phosphate. It functions in the pathway metabolic intermediate biosynthesis; chorismate biosynthesis; chorismate from D-erythrose 4-phosphate and phosphoenolpyruvate: step 7/7. Its function is as follows. Catalyzes the anti-1,4-elimination of the C-3 phosphate and the C-6 proR hydrogen from 5-enolpyruvylshikimate-3-phosphate (EPSP) to yield chorismate, which is the branch point compound that serves as the starting substrate for the three terminal pathways of aromatic amino acid biosynthesis. This reaction introduces a second double bond into the aromatic ring system. This chain is Chorismate synthase, found in Mesorhizobium japonicum (strain LMG 29417 / CECT 9101 / MAFF 303099) (Mesorhizobium loti (strain MAFF 303099)).